The chain runs to 237 residues: Ribonuclease PH (237 aa).

Phosphate-binding positions include Arg-86 and 124–126; that span reads GTR.

It belongs to the RNase PH family. Homohexameric ring arranged as a trimer of dimers.

It carries out the reaction tRNA(n+1) + phosphate = tRNA(n) + a ribonucleoside 5'-diphosphate. In terms of biological role, phosphorolytic 3'-5' exoribonuclease that plays an important role in tRNA 3'-end maturation. Removes nucleotide residues following the 3'-CCA terminus of tRNAs; can also add nucleotides to the ends of RNA molecules by using nucleoside diphosphates as substrates, but this may not be physiologically important. Probably plays a role in initiation of 16S rRNA degradation (leading to ribosome degradation) during starvation. This chain is Ribonuclease PH, found in Dinoroseobacter shibae (strain DSM 16493 / NCIMB 14021 / DFL 12).